We begin with the raw amino-acid sequence, 351 residues long: Protein-glutamate methylesterase/protein-glutamine glutaminase 2 (351 aa).

The region spanning 4–121 (KVLVVDDSAL…PQDFNEYQDL (118 aa)) is the Response regulatory domain. Aspartate 55 is subject to 4-aspartylphosphate. The 193-residue stretch at 156-348 (RVINTQLVAI…DKMLNYLASL (193 aa)) folds into the CheB-type methylesterase domain. Catalysis depends on residues serine 168, histidine 194, and aspartate 290.

It belongs to the CheB family. Post-translationally, phosphorylated by CheA. Phosphorylation of the N-terminal regulatory domain activates the methylesterase activity.

It is found in the cytoplasm. It catalyses the reaction [protein]-L-glutamate 5-O-methyl ester + H2O = L-glutamyl-[protein] + methanol + H(+). The enzyme catalyses L-glutaminyl-[protein] + H2O = L-glutamyl-[protein] + NH4(+). Functionally, involved in chemotaxis. Part of a chemotaxis signal transduction system that modulates chemotaxis in response to various stimuli. Catalyzes the demethylation of specific methylglutamate residues introduced into the chemoreceptors (methyl-accepting chemotaxis proteins or MCP) by CheR. Also mediates the irreversible deamidation of specific glutamine residues to glutamic acid. In Shewanella sp. (strain MR-4), this protein is Protein-glutamate methylesterase/protein-glutamine glutaminase 2.